The following is a 340-amino-acid chain: Phosphoribosylformylglycinamidine cyclo-ligase (340 aa).

Belongs to the AIR synthase family.

Its subcellular location is the cytoplasm. It carries out the reaction 2-formamido-N(1)-(5-O-phospho-beta-D-ribosyl)acetamidine + ATP = 5-amino-1-(5-phospho-beta-D-ribosyl)imidazole + ADP + phosphate + H(+). Its pathway is purine metabolism; IMP biosynthesis via de novo pathway; 5-amino-1-(5-phospho-D-ribosyl)imidazole from N(2)-formyl-N(1)-(5-phospho-D-ribosyl)glycinamide: step 2/2. The chain is Phosphoribosylformylglycinamidine cyclo-ligase from Acetivibrio thermocellus (strain ATCC 27405 / DSM 1237 / JCM 9322 / NBRC 103400 / NCIMB 10682 / NRRL B-4536 / VPI 7372) (Clostridium thermocellum).